Consider the following 154-residue polypeptide: Cytochrome c-type biogenesis protein CcmE (154 aa).

The Cytoplasmic segment spans residues 1–8 (MTPQRKRR). Residues 9–29 (LVMLAALAGGVGVAVALALAA) form a helical; Signal-anchor for type II membrane protein membrane-spanning segment. The Periplasmic segment spans residues 30 to 154 (LQQNINLFYS…GGTPAAEPQP (125 aa)). Heme contacts are provided by His-124 and Tyr-128. Residues 130 to 154 (PPEAAHALKQGAATSGGTPAAEPQP) form a disordered region.

This sequence belongs to the CcmE/CycJ family.

The protein resides in the cell inner membrane. Its function is as follows. Heme chaperone required for the biogenesis of c-type cytochromes. Transiently binds heme delivered by CcmC and transfers the heme to apo-cytochromes in a process facilitated by CcmF and CcmH. The polypeptide is Cytochrome c-type biogenesis protein CcmE (Bordetella petrii (strain ATCC BAA-461 / DSM 12804 / CCUG 43448)).